Reading from the N-terminus, the 422-residue chain is UDP-N-acetylglucosamine 1-carboxyvinyltransferase (422 aa).

Residue 22-23 coordinates phosphoenolpyruvate; that stretch reads KN. Arg-92 is a binding site for UDP-N-acetyl-alpha-D-glucosamine. Catalysis depends on Cys-116, which acts as the Proton donor. 2-(S-cysteinyl)pyruvic acid O-phosphothioketal is present on Cys-116. Residues 121–125, Asp-307, and Leu-329 contribute to the UDP-N-acetyl-alpha-D-glucosamine site; that span reads RPVDL.

It belongs to the EPSP synthase family. MurA subfamily.

It is found in the cytoplasm. The catalysed reaction is phosphoenolpyruvate + UDP-N-acetyl-alpha-D-glucosamine = UDP-N-acetyl-3-O-(1-carboxyvinyl)-alpha-D-glucosamine + phosphate. Its pathway is cell wall biogenesis; peptidoglycan biosynthesis. Cell wall formation. Adds enolpyruvyl to UDP-N-acetylglucosamine. The chain is UDP-N-acetylglucosamine 1-carboxyvinyltransferase from Aliarcobacter butzleri (strain RM4018) (Arcobacter butzleri).